The sequence spans 152 residues: Catabolic 3-dehydroquinase (152 aa).

The active-site Proton acceptor is the Tyr-24. The substrate site is built by Asn-75, His-81, and Asp-88. The active-site Proton donor is the His-101. Substrate-binding positions include 102 to 103 and Arg-112; that span reads IS.

Belongs to the type-II 3-dehydroquinase family. As to quaternary structure, homododecamer. Adopts a ring-like structure, composed of an arrangement of two hexameric rings stacked on top of one another.

It catalyses the reaction 3-dehydroquinate = 3-dehydroshikimate + H2O. Its pathway is aromatic compound metabolism; 3,4-dihydroxybenzoate biosynthesis; 3,4-dihydroxybenzoate from 3-dehydroquinate: step 1/2. Its function is as follows. Is involved in the catabolism of quinate. Allows the utilization of quinate as carbon source via the beta-ketoadipate pathway. The sequence is that of Catabolic 3-dehydroquinase from Phaeosphaeria nodorum (strain SN15 / ATCC MYA-4574 / FGSC 10173) (Glume blotch fungus).